We begin with the raw amino-acid sequence, 162 residues long: Ribose-5-phosphate isomerase B (162 aa).

D-ribulose 5-phosphate is bound by residues 11–12 (DH) and 70–74 (GSGNG). The active-site Proton acceptor is the Glu-75. His-102 acts as the Proton donor in catalysis. D-ribulose 5-phosphate-binding residues include Asn-103, Arg-113, Arg-137, and Arg-141.

It belongs to the LacAB/RpiB family. Homodimer.

It carries out the reaction aldehydo-D-ribose 5-phosphate = D-ribulose 5-phosphate. It functions in the pathway carbohydrate degradation; pentose phosphate pathway; D-ribose 5-phosphate from D-ribulose 5-phosphate (non-oxidative stage): step 1/1. In terms of biological role, catalyzes the interconversion of ribulose-5-P and ribose-5-P. The polypeptide is Ribose-5-phosphate isomerase B (Mycobacterium bovis (strain ATCC BAA-935 / AF2122/97)).